The following is a 362-amino-acid chain: MKLHCCLFTLVASIIVPAAFVLEDVDFNQMVSLEANRSSYNASFPSSFELSASSHSDDDVIIAKEGTSVSIECLLTASHYEDVHWHNSKGQQLDGRGRGGKWLVSDNFLNITNVAFDDRGLYTCFVTSPIRASYSVTLRVIFTSGDMSVYYMIVCLIAFTITLILNVTRLCMMSSHLRKTEKAINEFFRTEGAEKLQKAFEIAKRIPIITSAKTLELAKVTQFKTMEFARYIEELARSVPLPPLILNCRAFVEEMFEAVRVDDPDDLGERIKERPALNAQGGIYVINPEMGRSNSPGGDSDDGSLNEQGQEIAVQVSVHLQSETKSIDTESQGSSHFSPPDDTGSAESNCNYKDGAYENSQL.

Positions Met-1–Ala-19 are cleaved as a signal peptide. Topologically, residues Phe-20–Asp-146 are extracellular. Asn-36, Asn-41, and Asn-110 each carry an N-linked (GlcNAc...) asparagine glycan. One can recognise an Ig-like C2-type domain in the interval Pro-45–Thr-137. A disulfide bond links Cys-73 and Cys-124. The chain crosses the membrane as a helical span at residues Met-147–Val-167. The Cytoplasmic segment spans residues Thr-168–Leu-362. 2 disordered regions span residues Gly-282–Asn-306 and His-319–Leu-362. Over residues His-319 to Phe-337 the composition is skewed to polar residues.

Glycosylated.

It localises to the cell membrane. Its function is as follows. Component of the elastin-associated microfibrils. The polypeptide is Microfibril-associated glycoprotein 3 (MFAP3) (Pongo abelii (Sumatran orangutan)).